A 282-amino-acid polypeptide reads, in one-letter code: Putative SLC9B1-like protein SLC9B1P1 (282 aa).

7 helical membrane passes run 27 to 47, 51 to 71, 87 to 107, 135 to 155, 174 to 194, 198 to 218, and 239 to 259; these read LLAI…GGMI, IASL…GFFV, GFLV…IGLH, IITN…GAEV, LALC…GFSF, IFIA…GPLA, and VAFL…GILG.

It belongs to the monovalent cation:proton antiporter 1 (CPA1) transporter (TC 2.A.36) family.

Its subcellular location is the membrane. The protein is Putative SLC9B1-like protein SLC9B1P1 (SLC9B1P1) of Homo sapiens (Human).